The sequence spans 123 residues: Protein Wnt-7b (123 aa).

Serine 1 is lipidated: O-palmitoleoyl serine; by PORCN. The segment at 33 to 61 (VEVVRASRLRQPTFLKIKQIKSYQKPMET) is disordered linker. The cysteines at positions 89 and 104 are disulfide-linked. Residue asparagine 90 is glycosylated (N-linked (GlcNAc...) asparagine).

The protein belongs to the Wnt family. Palmitoleoylation is required for efficient binding to frizzled receptors. Depalmitoleoylation leads to Wnt signaling pathway inhibition.

It localises to the secreted. The protein localises to the extracellular space. It is found in the extracellular matrix. Functionally, ligand for members of the frizzled family of seven transmembrane receptors that functions in the canonical Wnt/beta-catenin signaling pathway. Required for normal fusion of the chorion and the allantois during placenta development. Required for central nervous system (CNS) angiogenesis and blood-brain barrier regulation. In Anser caerulescens (Snow goose), this protein is Protein Wnt-7b (WNT7B).